An 850-amino-acid polypeptide reads, in one-letter code: MSIAPAAHTPMMQQYLGIKAQHPDMLLFYRMGDFYELFFEDAEKAARLLNITLTTRGASAGSPIKMAGVPYHSAEQYLARLLKLGESVVIAEQVGDPAASKGPVERRVSRVVTPGTLTDAGLLDETRDALIMAIAVAGDVLGVAWLNLAAGRFQVTELDRTALPALLARVRPAEILAHEHLDLAADCPVRRLDAWQFDADGASKRLARQFGSCDLQGFGVAEMHCAIAAAGALLGYIETTQRTALPHLLSIRAERDSDFVLLDAATRRNLELTETLRGDAAPTLRSVLDTTCSGMGTRLLRHWLHHPLRDRAAVAARRDAIGVLAAAPDSAARLADLLKRCADVERIGGRIALKNARPRDLSGLRDTLALLPELAAALPTDGARLAALRDAVAATPDVHALLVRAIQPEPASVLREGGVIADGYDAELDELRALTRDAGAFLLELETRERARSGIATLKVEYNKVHGFYIEVGRAQAERVPDDYRRRQTLKNVERYLTPELKAFEDKALSAQERALAREKALFEALLDTLIPHVPNLLSIASALAEIDVLASQAERASTLRLCAPEFSDDPCIVIRGGRHPVVEAQVEHFIPNDVVLNRTRQMLLITGPNMGGKSTYMRQVALITLMACCGLWVPAASARIGAIDQIFTRIGASDDLAGGRSTFMVEMTETANILHSATADSLVLLDEIGRGTSTFDGLALAWAVARHLVSATRAFTLFATHYFELTQLAQEYRQLANVHLDAKEHGADLVFLHAVEDGPASQSYGIQVARLAGVPGPVIHAARRRLRELEDAQLQPGPQGDLFAAHLPRDEAPPHPALDQLRELDPDTLTPKAALDMLYALKALTDSEP.

Position 608 to 615 (608 to 615 (GPNMGGKS)) interacts with ATP.

Belongs to the DNA mismatch repair MutS family.

In terms of biological role, this protein is involved in the repair of mismatches in DNA. It is possible that it carries out the mismatch recognition step. This protein has a weak ATPase activity. The sequence is that of DNA mismatch repair protein MutS from Thiobacillus denitrificans (strain ATCC 25259 / T1).